A 295-amino-acid chain; its full sequence is Acetyl-coenzyme A carboxylase carboxyl transferase subunit beta (295 aa).

The CoA carboxyltransferase N-terminal domain occupies 25-294 (VWTKCTSCEQ…PFNAEELSDT (270 aa)). 4 residues coordinate Zn(2+): Cys29, Cys32, Cys48, and Cys51. The C4-type zinc finger occupies 29-51 (CTSCEQVLYRDELKRHLEVCPKC).

It belongs to the AccD/PCCB family. Acetyl-CoA carboxylase is a heterohexamer composed of biotin carboxyl carrier protein (AccB), biotin carboxylase (AccC) and two subunits each of ACCase subunit alpha (AccA) and ACCase subunit beta (AccD). It depends on Zn(2+) as a cofactor.

The protein localises to the cytoplasm. The catalysed reaction is N(6)-carboxybiotinyl-L-lysyl-[protein] + acetyl-CoA = N(6)-biotinyl-L-lysyl-[protein] + malonyl-CoA. The protein operates within lipid metabolism; malonyl-CoA biosynthesis; malonyl-CoA from acetyl-CoA: step 1/1. Its function is as follows. Component of the acetyl coenzyme A carboxylase (ACC) complex. Biotin carboxylase (BC) catalyzes the carboxylation of biotin on its carrier protein (BCCP) and then the CO(2) group is transferred by the transcarboxylase to acetyl-CoA to form malonyl-CoA. This is Acetyl-coenzyme A carboxylase carboxyl transferase subunit beta from Mannheimia succiniciproducens (strain KCTC 0769BP / MBEL55E).